Consider the following 396-residue polypeptide: ATP-dependent RNA helicase eIF4A (396 aa).

The Q motif signature appears at histidine 22 to glutamine 50. Positions isoleucine 53–isoleucine 223 constitute a Helicase ATP-binding domain. Residue alanine 66–threonine 73 coordinates ATP. Residues aspartate 171–aspartate 174 carry the DEAD box motif. A Helicase C-terminal domain is found at glycine 234 to phenylalanine 395.

Belongs to the DEAD box helicase family. eIF4A subfamily. Component of the eIF4F complex, which composition varies with external and internal environmental conditions. It is composed of at least eIF4A, eIF4E and eIF4G.

The protein resides in the cytoplasm. It catalyses the reaction ATP + H2O = ADP + phosphate + H(+). In terms of biological role, ATP-dependent RNA helicase which is a subunit of the eIF4F complex involved in cap recognition and is required for mRNA binding to ribosome. In the current model of translation initiation, eIF4A unwinds RNA secondary structures in the 5'-UTR of mRNAs which is necessary to allow efficient binding of the small ribosomal subunit, and subsequent scanning for the initiator codon. The chain is ATP-dependent RNA helicase eIF4A (TIF1) from Eremothecium gossypii (strain ATCC 10895 / CBS 109.51 / FGSC 9923 / NRRL Y-1056) (Yeast).